A 535-amino-acid polypeptide reads, in one-letter code: Light-independent protochlorophyllide reductase subunit B (535 aa).

A [4Fe-4S] cluster-binding site is contributed by Asp-36. Residue Asp-292 is the Proton donor of the active site. Gly-428–Leu-429 contributes to the substrate binding site.

The protein belongs to the ChlB/BchB/BchZ family. In terms of assembly, protochlorophyllide reductase is composed of three subunits; BchL, BchN and BchB. Forms a heterotetramer of two BchB and two BchN subunits. It depends on [4Fe-4S] cluster as a cofactor.

It catalyses the reaction chlorophyllide a + oxidized 2[4Fe-4S]-[ferredoxin] + 2 ADP + 2 phosphate = protochlorophyllide a + reduced 2[4Fe-4S]-[ferredoxin] + 2 ATP + 2 H2O. It functions in the pathway porphyrin-containing compound metabolism; bacteriochlorophyll biosynthesis (light-independent). Component of the dark-operative protochlorophyllide reductase (DPOR) that uses Mg-ATP and reduced ferredoxin to reduce ring D of protochlorophyllide (Pchlide) to form chlorophyllide a (Chlide). This reaction is light-independent. The NB-protein (BchN-BchB) is the catalytic component of the complex. In Chlorobaculum parvum (strain DSM 263 / NCIMB 8327) (Chlorobium vibrioforme subsp. thiosulfatophilum), this protein is Light-independent protochlorophyllide reductase subunit B.